The following is a 308-amino-acid chain: Protein translocase subunit SecF (308 aa).

6 consecutive transmembrane segments (helical) span residues 28–48 (SIIL…NFGI), 140–160 (IEAG…YIWV), 164–184 (WYFG…ALGF), 194–214 (LSTI…SVVI), 246–266 (ILTV…GGEA), and 272–292 (VLVF…SAPI).

The protein belongs to the SecD/SecF family. SecF subfamily. Forms a complex with SecD. Part of the essential Sec protein translocation apparatus which comprises SecA, SecYEG and auxiliary proteins SecDF-YajC and YidC.

It localises to the cell inner membrane. Functionally, part of the Sec protein translocase complex. Interacts with the SecYEG preprotein conducting channel. SecDF uses the proton motive force (PMF) to complete protein translocation after the ATP-dependent function of SecA. This chain is Protein translocase subunit SecF, found in Rickettsia conorii (strain ATCC VR-613 / Malish 7).